The sequence spans 197 residues: UPF0301 protein AnaeK_4073 (197 aa).

This sequence belongs to the UPF0301 (AlgH) family.

This Anaeromyxobacter sp. (strain K) protein is UPF0301 protein AnaeK_4073.